The chain runs to 336 residues: UDP-N-acetylenolpyruvoylglucosamine reductase (336 aa).

In terms of domain architecture, FAD-binding PCMH-type spans Gly-17–Asp-188. Arg-164 is an active-site residue. Ser-236 serves as the catalytic Proton donor. Glu-332 is a catalytic residue.

This sequence belongs to the MurB family. It depends on FAD as a cofactor.

The protein localises to the cytoplasm. It carries out the reaction UDP-N-acetyl-alpha-D-muramate + NADP(+) = UDP-N-acetyl-3-O-(1-carboxyvinyl)-alpha-D-glucosamine + NADPH + H(+). It functions in the pathway cell wall biogenesis; peptidoglycan biosynthesis. In terms of biological role, cell wall formation. The chain is UDP-N-acetylenolpyruvoylglucosamine reductase from Cupriavidus pinatubonensis (strain JMP 134 / LMG 1197) (Cupriavidus necator (strain JMP 134)).